The following is a 229-amino-acid chain: Ras-related protein rab-39 (229 aa).

73-77 (DTAGQ) is a GTP binding site. Residues Cys227 and Cys229 are each lipidated (S-geranylgeranyl cysteine). Cysteine methyl ester is present on Cys229.

The protein belongs to the small GTPase superfamily. Rab family. As to quaternary structure, interacts (in GTP-bound form) with Ras association domain-containing protein rsf-1.

The protein localises to the cell membrane. Its subcellular location is the cytoplasmic vesicle membrane. It localises to the golgi apparatus. Functionally, small GTPases Rab involved in autophagy. The small GTPases Rab are key regulators of intracellular membrane trafficking, from the formation of transport vesicles to their fusion with membranes. Rabs cycle between an inactive GDP-bound form and an active GTP-bound form that is able to recruit to membranes different sets of downstream effectors directly responsible for vesicle formation, movement, tethering and fusion. Involved in positively regulating the oxidative stress response, perhaps in concert with the Ras association domain-containing protein rsf-1. The polypeptide is Ras-related protein rab-39 (Caenorhabditis elegans).